Consider the following 147-residue polypeptide: Large ribosomal subunit protein uL15 (147 aa).

A disordered region spans residues 1 to 46 (MSIRLENLSYTPGARKEKHRKGRGHAAGKGKQAGRGQSGQKKRSTV). A compositionally biased stretch (basic residues) spans 16 to 28 (KEKHRKGRGHAAG).

It belongs to the universal ribosomal protein uL15 family. Part of the 50S ribosomal subunit.

In terms of biological role, binds to the 23S rRNA. This Mesomycoplasma hyopneumoniae (strain J / ATCC 25934 / NCTC 10110) (Mycoplasma hyopneumoniae) protein is Large ribosomal subunit protein uL15.